We begin with the raw amino-acid sequence, 125 residues long: Small ribosomal subunit protein uS13 (125 aa).

Positions 90 to 125 (QRHRKGLPVRGQRTKTNARTRKGPKRTVAGKKKATK) are disordered.

The protein belongs to the universal ribosomal protein uS13 family. As to quaternary structure, part of the 30S ribosomal subunit. Forms a loose heterodimer with protein S19. Forms two bridges to the 50S subunit in the 70S ribosome.

Located at the top of the head of the 30S subunit, it contacts several helices of the 16S rRNA. In the 70S ribosome it contacts the 23S rRNA (bridge B1a) and protein L5 of the 50S subunit (bridge B1b), connecting the 2 subunits; these bridges are implicated in subunit movement. Contacts the tRNAs in the A and P-sites. This chain is Small ribosomal subunit protein uS13, found in Bifidobacterium longum (strain DJO10A).